Consider the following 198-residue polypeptide: Recombination protein RecR (198 aa).

The C4-type zinc finger occupies 57–72 (CSVCNNITDLDPCHIC). Residues 80–175 (SIICVVQEPR…RVTRIAHGLP (96 aa)) enclose the Toprim domain.

The protein belongs to the RecR family.

In terms of biological role, may play a role in DNA repair. It seems to be involved in an RecBC-independent recombinational process of DNA repair. It may act with RecF and RecO. The protein is Recombination protein RecR of Brevibacillus brevis (strain 47 / JCM 6285 / NBRC 100599).